A 540-amino-acid chain; its full sequence is Phosphoenolpyruvate carboxykinase (ATP) (540 aa).

Position 65 (arginine 65) interacts with substrate. Lysine 87 carries the N6-acetyllysine modification. Substrate contacts are provided by tyrosine 207 and lysine 213. Residues lysine 213, histidine 232, and 248-256 contribute to the ATP site; that span reads GLSGTGKTT. The Mn(2+) site is built by lysine 213 and histidine 232. Aspartate 269 is a Mn(2+) binding site. ATP is bound by residues glutamate 297, arginine 333, 449–450, and threonine 455; that span reads RI. A substrate-binding site is contributed by arginine 333. Lysine 523 bears the N6-acetyllysine mark.

It belongs to the phosphoenolpyruvate carboxykinase (ATP) family. Monomer. Mn(2+) serves as cofactor.

Its subcellular location is the cytoplasm. It carries out the reaction oxaloacetate + ATP = phosphoenolpyruvate + ADP + CO2. Its pathway is carbohydrate biosynthesis; gluconeogenesis. Involved in the gluconeogenesis. Catalyzes the conversion of oxaloacetate (OAA) to phosphoenolpyruvate (PEP) through direct phosphoryl transfer between the nucleoside triphosphate and OAA. The protein is Phosphoenolpyruvate carboxykinase (ATP) of Escherichia coli O7:K1 (strain IAI39 / ExPEC).